We begin with the raw amino-acid sequence, 87 residues long: Cytochrome c5 (87 aa).

Heme is bound by residues cysteine 19, cysteine 22, histidine 23, and methionine 63. A disulfide bond links cysteine 69 and cysteine 72.

This sequence belongs to the cytochrome c family. In terms of assembly, homodimer. Post-translationally, binds 1 heme group per subunit.

Its function is as follows. It is unreactive with cytochrome c reductase or oxidase but seems to function as an intermediate in nitrate respiration of facultative anaerobic pseudmonads. The sequence is that of Cytochrome c5 from Ectopseudomonas mendocina (Pseudomonas mendocina).